The sequence spans 467 residues: Replication factor A 51 kDa subunit (467 aa).

The OB DNA-binding region spans tryptophan 23–threonine 105. Residues cysteine 313–cysteine 335 form a C4-type zinc finger.

The protein belongs to the replication factor A protein 1 family. Component of the heterotrimeric canonical replication protein A complex (RPA). Post-translationally, the N-terminus is blocked.

It localises to the nucleus. Functionally, as part of the heterotrimeric replication protein A complex (RPA/RP-A), binds and stabilizes single-stranded DNA intermediates, that form during DNA replication or upon DNA stress. It prevents their reannealing and in parallel, recruits and activates different proteins and complexes involved in DNA metabolism. Thereby, it plays an essential role both in DNA replication and the cellular response to DNA damage. This chain is Replication factor A 51 kDa subunit (RPA1), found in Crithidia fasciculata.